A 111-amino-acid chain; its full sequence is BET1-like protein (111 aa).

Topologically, residues 1-86 are cytoplasmic; the sequence is MADWTRAQSS…MARSGRDNRK (86 aa). A phosphoserine mark is found at S9 and S37. In terms of domain architecture, t-SNARE coiled-coil homology spans 15-77; that stretch reads DILDRENKRM…TGSVKRFSTM (63 aa). A helical; Anchor for type IV membrane protein transmembrane segment spans residues 87 to 107; sequence LLCGMAVVLIVAFFILSYLLS. Residues 108 to 111 are Lumenal-facing; it reads RTRT.

In terms of assembly, component of a SNARE complex consisting of STX5, YKT6, GOSR1 and BET1L. Interacts with STX5.

The protein resides in the golgi apparatus membrane. It localises to the golgi apparatus. Its subcellular location is the trans-Golgi network membrane. Functionally, vesicle SNARE required for targeting and fusion of retrograde transport vesicles with the Golgi complex. Required for the integrity of the Golgi complex. The protein is BET1-like protein of Mus musculus (Mouse).